Here is a 141-residue protein sequence, read N- to C-terminus: Nucleoside diphosphate kinase (141 aa).

6 residues coordinate ATP: Lys11, Phe59, Arg87, Thr93, Arg104, and Asn114. The active-site Pros-phosphohistidine intermediate is the His117.

The protein belongs to the NDK family. In terms of assembly, homotetramer. Mg(2+) is required as a cofactor.

It is found in the cytoplasm. It carries out the reaction a 2'-deoxyribonucleoside 5'-diphosphate + ATP = a 2'-deoxyribonucleoside 5'-triphosphate + ADP. The catalysed reaction is a ribonucleoside 5'-diphosphate + ATP = a ribonucleoside 5'-triphosphate + ADP. Major role in the synthesis of nucleoside triphosphates other than ATP. The ATP gamma phosphate is transferred to the NDP beta phosphate via a ping-pong mechanism, using a phosphorylated active-site intermediate. This Xylella fastidiosa (strain M23) protein is Nucleoside diphosphate kinase.